Reading from the N-terminus, the 299-residue chain is Ribosomal protein L11 methyltransferase (299 aa).

4 residues coordinate S-adenosyl-L-methionine: threonine 139, glycine 166, aspartate 188, and asparagine 231.

It belongs to the methyltransferase superfamily. PrmA family.

It is found in the cytoplasm. The catalysed reaction is L-lysyl-[protein] + 3 S-adenosyl-L-methionine = N(6),N(6),N(6)-trimethyl-L-lysyl-[protein] + 3 S-adenosyl-L-homocysteine + 3 H(+). Methylates ribosomal protein L11. This is Ribosomal protein L11 methyltransferase from Thermosynechococcus vestitus (strain NIES-2133 / IAM M-273 / BP-1).